Here is a 277-residue protein sequence, read N- to C-terminus: Nudix hydrolase 10 (277 aa).

The region spanning 97–235 is the Nudix hydrolase domain; it reads WIPEAESTIP…KNDLFKDIHH (139 aa). A Nudix box motif is present at residues 142 to 163; sequence GVVDEGEEIFAAAIREVKEETG. Positions 157 and 161 each coordinate Mg(2+).

The protein belongs to the Nudix hydrolase family. Mg(2+) serves as cofactor. It depends on Mn(2+) as a cofactor. In terms of tissue distribution, expressed in roots, stems and, at lower level, leaves.

The enzyme catalyses ADP-D-ribose + H2O = D-ribose 5-phosphate + AMP + 2 H(+). It catalyses the reaction NAD(+) + H2O = beta-nicotinamide D-ribonucleotide + AMP + 2 H(+). The catalysed reaction is NADH + H2O = reduced beta-nicotinamide D-ribonucleotide + AMP + 2 H(+). In terms of biological role, may mediate the hydrolysis of some nucleoside diphosphate derivatives. In vitro, uses both ADP-ribose and NADH as substrates; however the relevance of such substrates in vivo is unclear. This chain is Nudix hydrolase 10 (NUDT10), found in Arabidopsis thaliana (Mouse-ear cress).